Here is a 588-residue protein sequence, read N- to C-terminus: Myc box-dependent-interacting protein 1 (588 aa).

N-acetylalanine is present on A2. Residues 2-122 (AEMGSKGVTA…DYHQKLVDQA (121 aa)) are interaction with BIN2. 2 coiled-coil regions span residues 15 to 42 (ASNV…TKDE) and 193 to 274 (HLVA…EKQH). The BAR domain occupies 29 to 276 (VLQKLGKADE…LVSLEKQHGS (248 aa)). The disordered stretch occupies residues 279–355 (FTVKAQPSDN…PKHTPSKEMK (77 aa)). S296, S298, and S304 each carry phosphoserine. T308 is modified (phosphothreonine). 2 positions are modified to phosphoserine: S324 and S332. The tract at residues 379–422 (FEAPGPFSEQASLLDLDFEPLPPVASPVKAPTPSGQSIPWDLWE) is clathrin-binding. The interval 448–484 (PSQTAEPGPAQPAEASEVVGGAQEPGETAASEATSSS) is disordered. Over residues 474-484 (ETAASEATSSS) the composition is skewed to low complexity. The region spanning 515-588 (GFMFKVQAQH…FPENFTERVQ (74 aa)) is the SH3 domain.

Heterodimer with AMPH. Binds SH3GLB1. Interacts (via SH3 domain) with DNM1. Interacts with SYNJ1. Interacts (via SH3 domain) with DNM2. Interacts with CLTC. Interacts with AP2A2. Interacts with AP2B1. Interacts with MYC (via N-terminal transactivation domain); the interaction requires the integrity of the conserved MYC box regions 1 and 2. Interacts with BIN2. Interacts with SNX4. Interacts (via BAR domain) with BACE1. Binds (via BAR domain) F-actin. Post-translationally, phosphorylated by protein kinase C. In terms of tissue distribution, isoform 1 is expressed mainly in the brain. Isoform 2 is widely expressed.

The protein localises to the nucleus. The protein resides in the cytoplasm. It is found in the endosome. It localises to the cell membrane. Its subcellular location is the sarcolemma. The protein localises to the T-tubule. Its function is as follows. Is a key player in the control of plasma membrane curvature, and membrane shaping and remodeling. Required in muscle cells for the formation of T-tubules, tubular invaginations of the plasma membrane that function in depolarization-contraction coupling. Required in muscle cells for the formation of T-tubules, tubular invaginations of the plasma membrane that function in depolarization-contraction coupling. Is a negative regulator of endocytosis. Is also involved in the regulation of intracellular vesicles sorting, modulation of BACE1 trafficking and the control of amyloid-beta production. In neuronal circuits, endocytosis regulation may influence the internalization of PHF-tau aggregates. May be involved in the regulation of MYC activity and the control cell proliferation. The polypeptide is Myc box-dependent-interacting protein 1 (Bin1) (Mus musculus (Mouse)).